The chain runs to 106 residues: Molt-inhibiting hormone (106 aa).

Residues 1 to 29 (MVNQVAQCFTVRRVWLVVVVGLLVHQTTA) form the signal peptide. 3 disulfide bridges follow: Cys-36/Cys-73, Cys-53/Cys-69, and Cys-56/Cys-82. Ala-104 bears the Alanine amide mark. Positions 105 to 106 (GR) are excised as a propeptide.

In terms of tissue distribution, sinus gland of the eyestalk.

Its subcellular location is the secreted. Its function is as follows. Inhibits Y-organs where molting hormone (ecdysteroid) is secreted. A molting cycle is initiated when MIH secretion diminishes or stops. The protein is Molt-inhibiting hormone of Faxonius limosus (Spinycheek crayfish).